Here is a 217-residue protein sequence, read N- to C-terminus: 3-demethoxyubiquinol 3-hydroxylase (217 aa).

Fe cation is bound by residues Glu66, Glu96, His99, Glu148, Glu180, and His183.

Belongs to the COQ7 family. It depends on Fe cation as a cofactor.

The protein localises to the cell membrane. The enzyme catalyses a 5-methoxy-2-methyl-3-(all-trans-polyprenyl)benzene-1,4-diol + AH2 + O2 = a 3-demethylubiquinol + A + H2O. It functions in the pathway cofactor biosynthesis; ubiquinone biosynthesis. In terms of biological role, catalyzes the hydroxylation of 2-nonaprenyl-3-methyl-6-methoxy-1,4-benzoquinol during ubiquinone biosynthesis. In Xanthomonas euvesicatoria pv. vesicatoria (strain 85-10) (Xanthomonas campestris pv. vesicatoria), this protein is 3-demethoxyubiquinol 3-hydroxylase.